The primary structure comprises 125 residues: Small ribosomal subunit protein uS12 (125 aa).

Residues 9-28 (RSERSKLKKKTKSPALKQCP) are disordered. The residue at position 89 (D89) is a 3-methylthioaspartic acid. Positions 104–125 (AQGVKDRKQGRSKYGTKRPKKA) are disordered. A compositionally biased stretch (basic residues) spans 113–125 (GRSKYGTKRPKKA).

Belongs to the universal ribosomal protein uS12 family. In terms of assembly, part of the 30S ribosomal subunit. Contacts proteins S8 and S17. May interact with IF1 in the 30S initiation complex.

In terms of biological role, with S4 and S5 plays an important role in translational accuracy. Functionally, interacts with and stabilizes bases of the 16S rRNA that are involved in tRNA selection in the A site and with the mRNA backbone. Located at the interface of the 30S and 50S subunits, it traverses the body of the 30S subunit contacting proteins on the other side and probably holding the rRNA structure together. The combined cluster of proteins S8, S12 and S17 appears to hold together the shoulder and platform of the 30S subunit. In Rippkaea orientalis (strain PCC 8801 / RF-1) (Cyanothece sp. (strain PCC 8801)), this protein is Small ribosomal subunit protein uS12.